The sequence spans 942 residues: Protein inturned (942 aa).

Positions methionine 1 to alanine 13 are enriched in basic and acidic residues. Disordered stretches follow at residues methionine 1 to glutamate 54 and proline 129 to serine 150. Acidic residues predominate over residues serine 22–serine 32. Over residues aspartate 33–aspartate 48 the composition is skewed to low complexity. Residues serine 138–serine 150 are compositionally biased toward polar residues. The PDZ domain occupies leucine 189–asparagine 267. A phosphoserine mark is found at serine 674 and serine 678. The interval lysine 707 to asparagine 752 is disordered.

Belongs to the inturned family. Component of the CPLANE (ciliogenesis and planar polarity effectors) complex, composed of INTU, FUZ and WDPCP. Interacts with CPLANE1. Interacts with NPHP4 and DAAM1; INTU is mediating the interaction between NPHP4 and DAAM1.

Its subcellular location is the cytoplasm. It is found in the cell surface. It localises to the cytoskeleton. The protein localises to the cilium basal body. The protein resides in the microtubule organizing center. Its subcellular location is the centrosome. It is found in the centriole. Plays a key role in ciliogenesis and embryonic development. Regulator of cilia formation by controlling the organization of the apical actin cytoskeleton and the positioning of the basal bodies at the apical cell surface, which in turn is essential for the normal orientation of elongating ciliary microtubules. Plays a key role in definition of cell polarity via its role in ciliogenesis but not via conversion extension. Has an indirect effect on hedgehog signaling. Proposed to function as core component of the CPLANE (ciliogenesis and planar polarity effectors) complex involved in the recruitment of peripheral IFT-A proteins to basal bodies. Required for recruitment of CPLANE2 to the mother centriole. Binds phosphatidylinositol 3-phosphate with highest affinity, followed by phosphatidylinositol 4-phosphate and phosphatidylinositol 5-phosphate. The sequence is that of Protein inturned (Intu) from Rattus norvegicus (Rat).